We begin with the raw amino-acid sequence, 373 residues long: Peptide chain release factor 1-like, mitochondrial (373 aa).

The transit peptide at 1–25 (MRSGFLSGARRLWARRAFSRTPPPS) directs the protein to the mitochondrion. The stretch at 56–110 (QLAAAARLLSEKERELRDTESLLHDENEDLKKLAESEIALCQKQITELKHQIISL) forms a coiled coil. Residues 229-293 (PKDLRIDTKR…LRARLYSMHL (65 aa)) are GGQ domain. Residues 243-245 (GGQ) carry the GGQ motif. Gln-245 bears the N5-methylglutamine mark.

This sequence belongs to the prokaryotic/mitochondrial release factor family. Methylation of glutamine in the GGQ triplet by HEMK1 is conserved from bacteria to mammals.

It localises to the mitochondrion. In terms of biological role, mitochondrial peptide chain release factor that directs the termination of translation in response to the peptide chain termination codons UAA and UAG. The sequence is that of Peptide chain release factor 1-like, mitochondrial (Mtrf1l) from Mus musculus (Mouse).